Consider the following 425-residue polypeptide: uncharacterized protein (425 aa).

This sequence to K.pneumoniae SorE.

This is an uncharacterized protein from Escherichia coli (strain K12).